The chain runs to 274 residues: Small nuclear ribonucleoprotein-associated protein B (274 aa).

One can recognise a Sm domain in the interval 5-85; the sequence is PKSSKMLQYI…VVSMSVEAPP (81 aa). The tract at residues 148–274 is disordered; that stretch reads PGGGVPPPMG…PMGRGGFQRK (127 aa). Repeat 1 spans residues 162–171; it reads PPQGFPPGGP. The tract at residues 162–265 is 6 X 10 AA repeats of P-P-Q-G-F-P-P-G-G-P; it reads PPQGFPPGGP…PPQGFPPGGP (104 aa). The segment covering 173–187 has biased composition (low complexity); that stretch reads PQGAFNNNPNNNNGG. 5 consecutive repeat copies span residues 188-197, 204-213, 225-234, 241-250, and 256-265. Residues 216–226 show a composition bias toward low complexity; that stretch reads GPNLNNGNMPP. Residues 265–274 show a composition bias toward gly residues; sequence PMGRGGFQRK.

It belongs to the snRNP SmB/SmN family.

The protein localises to the cytoplasm. It localises to the cytosol. It is found in the nucleus. Plays a role in pre-mRNA splicing as a core component of the spliceosomal U1, U2, U4 and U5 small nuclear ribonucleoproteins (snRNPs), the building blocks of the spliceosome. In Dictyostelium discoideum (Social amoeba), this protein is Small nuclear ribonucleoprotein-associated protein B (snrpb).